We begin with the raw amino-acid sequence, 248 residues long: Large ribosomal subunit protein bL9m (248 aa).

The transit peptide at 1–25 (MLKNIYVTPLNLLKSATSLQQQVRT) directs the protein to the mitochondrion.

It belongs to the bacterial ribosomal protein bL9 family. As to quaternary structure, component of the mitochondrial ribosome large subunit (39S) which comprises a 16S rRNA and about 50 distinct proteins.

The protein localises to the mitochondrion. The chain is Large ribosomal subunit protein bL9m (mRpL9) from Drosophila melanogaster (Fruit fly).